Reading from the N-terminus, the 216-residue chain is MSCLPALDKFLQNYHQAYLTSLGELPRYYPQGEASVCIQGEFHADLDQAVSWQPVKREVEGSFANVEHALELTLWPEINHFYGQYFSAPLLFDSEWGTGELLQVWNEDDFTCLQQNLIGHLMMKKKLKQPPTWFIGLLDEGDKMLTINNSDGSVWIELPGEIPTQQLSPSLAEFIGALSPRIAPPVKHEELPMPALEHPGIFASFKRMWQNLFGKR.

It belongs to the Syd family.

The protein resides in the cell inner membrane. Its function is as follows. Interacts with the SecY protein in vivo. May bind preferentially to an uncomplexed state of SecY, thus functioning either as a chelating agent for excess SecY in the cell or as a regulatory factor that negatively controls the translocase function. The sequence is that of Protein Syd from Shewanella baltica (strain OS223).